Here is a 235-residue protein sequence, read N- to C-terminus: Serine protease SplA (235 aa).

A signal peptide spans 1 to 35; it reads MNKNVMVKGLTALTILTSLGFAENISNQPHSIAKA. Active-site charge relay system residues include His74, Asp113, and Ser189.

Belongs to the peptidase S1B family.

The protein localises to the secreted. The protein is Serine protease SplA (splA) of Staphylococcus aureus (strain Mu3 / ATCC 700698).